We begin with the raw amino-acid sequence, 316 residues long: N-acetylmuramic acid 6-phosphate etherase (316 aa).

A disordered region spans residues 1 to 24 (MTRFQSDAAVSADRGHLMTEQPNP). Positions 66-229 (IASRLKDGGR…STAVMVRLGK (164 aa)) constitute an SIS domain. E94 serves as the catalytic Proton donor. E125 is a catalytic residue.

This sequence belongs to the GCKR-like family. MurNAc-6-P etherase subfamily. Homodimer.

The enzyme catalyses N-acetyl-D-muramate 6-phosphate + H2O = N-acetyl-D-glucosamine 6-phosphate + (R)-lactate. It functions in the pathway amino-sugar metabolism; N-acetylmuramate degradation. In terms of biological role, specifically catalyzes the cleavage of the D-lactyl ether substituent of MurNAc 6-phosphate, producing GlcNAc 6-phosphate and D-lactate. The chain is N-acetylmuramic acid 6-phosphate etherase from Parasynechococcus marenigrum (strain WH8102).